Reading from the N-terminus, the 352-residue chain is 4-hydroxybenzaldehyde synthase, chloroplastic (352 aa).

The N-linked (GlcNAc...) asparagine glycan is linked to asparagine 122. 2 disulfide bridges follow: cysteine 159-cysteine 199 and cysteine 190-cysteine 231. N-linked (GlcNAc...) asparagine glycosylation is present at asparagine 247. A disulfide bridge links cysteine 289 with cysteine 339. Residues histidine 298 and asparagine 318 contribute to the active site.

It belongs to the peptidase C1 family. Forms homodimers, homotrimers and homotetramers. In terms of tissue distribution, mainly expressed in pods, but also present in stems, roots, leaves and embryos (at protein level).

Its subcellular location is the plastid. It localises to the chloroplast. The enzyme catalyses (E)-4-coumarate + H2O = 4-hydroxybenzaldehyde + acetate. It functions in the pathway aromatic compound metabolism; phenylpropanoid biosynthesis. Inhibited by ascorbate. Functionally, involved in the biosynthesis of vanillin (4-hydroxy-3-methoxy-benzaldehyde) and derivative natural products, key components of vanilla pods flavor. Catalyzes the conversion of (E)-4-coumarate to 4-hydroxybenzaldehyde, a vanillin precursor. Mediates the conversion of ferulic acid to 3-methoxy-4-hydroxybenzaldehyde with a very low efficiency. Cannot use cinnamic, caffeic, sinapic and o-coumaric acids as substrates. In Vanilla planifolia (Vanilla), this protein is 4-hydroxybenzaldehyde synthase, chloroplastic.